We begin with the raw amino-acid sequence, 349 residues long: Isopentenyl-diphosphate delta-isomerase (349 aa).

Residue 12–13 participates in substrate binding; the sequence is RK. FMN contacts are provided by residues S69, 70 to 72, S101, and N129; that span reads SMT. 101 to 103 serves as a coordination point for substrate; that stretch reads SQR. Q164 lines the substrate pocket. Residue E165 coordinates Mg(2+). Residues K196, T226, 279 to 281, and 300 to 301 contribute to the FMN site; these read GIR and AA.

The protein belongs to the IPP isomerase type 2 family. As to quaternary structure, homooctamer. Dimer of tetramers. The cofactor is FMN. NADPH is required as a cofactor. It depends on Mg(2+) as a cofactor.

The protein localises to the cytoplasm. It catalyses the reaction isopentenyl diphosphate = dimethylallyl diphosphate. Functionally, involved in the biosynthesis of isoprenoids. Catalyzes the 1,3-allylic rearrangement of the homoallylic substrate isopentenyl (IPP) to its allylic isomer, dimethylallyl diphosphate (DMAPP). The polypeptide is Isopentenyl-diphosphate delta-isomerase (Paracoccus zeaxanthinifaciens).